A 135-amino-acid chain; its full sequence is Small ribosomal subunit protein uS12 (135 aa).

The interval M1–Q29 is disordered. D89 bears the 3-methylthioaspartic acid mark. The tract at residues G106–K135 is disordered. The span at S113–K123 shows a compositional bias: basic residues.

Belongs to the universal ribosomal protein uS12 family. In terms of assembly, part of the 30S ribosomal subunit. Contacts proteins S8 and S17. May interact with IF1 in the 30S initiation complex.

With S4 and S5 plays an important role in translational accuracy. In terms of biological role, interacts with and stabilizes bases of the 16S rRNA that are involved in tRNA selection in the A site and with the mRNA backbone. Located at the interface of the 30S and 50S subunits, it traverses the body of the 30S subunit contacting proteins on the other side and probably holding the rRNA structure together. The combined cluster of proteins S8, S12 and S17 appears to hold together the shoulder and platform of the 30S subunit. In Sulfurihydrogenibium sp. (strain YO3AOP1), this protein is Small ribosomal subunit protein uS12.